A 381-amino-acid chain; its full sequence is Actin-binding Rho-activating protein (381 aa).

Disordered stretches follow at residues 39–156 (ENSI…SHGS) and 179–207 (QEEP…PEQD). The span at 69–79 (PTSHQKAQSAP) shows a compositional bias: polar residues. The segment covering 97-110 (KAPEVSHIKKKEVS) has biased composition (basic and acidic residues). A phosphoserine mark is found at serine 156 and serine 188. A compositionally biased stretch (basic and acidic residues) spans 179–188 (QEEPTWRSDS). 2 actin-binding regions span residues 199–299 (EAEE…AERA) and 300–381 (KRAE…TLLK). Interaction with actin stretches follow at residues 240-285 (SPVG…GDEG) and 352-381 (MRAR…TLLK).

As to quaternary structure, binds F-actin and ABLIM1, ABLIM2 and ABLIM3. Interaction with ABLIM2 and ABLIM3 enhances activity.

It localises to the cytoplasm. Its subcellular location is the myofibril. The protein localises to the sarcomere. The protein resides in the cytoskeleton. Its function is as follows. Acts as an activator of serum response factor (SRF)-dependent transcription possibly by inducing nuclear translocation of MKL1 or MKL2 and through a mechanism requiring Rho-actin signaling. This is Actin-binding Rho-activating protein from Homo sapiens (Human).